Consider the following 737-residue polypeptide: Catalase-peroxidase (737 aa).

Residues 102–225 (WHSAGTYRTG…LGAVQMGLIY (124 aa)) constitute a cross-link (tryptophyl-tyrosyl-methioninium (Trp-Tyr) (with M-251)). The Proton acceptor role is filled by H103. Residues 225-251 (YVNPEGPNGKPDPLAAAHDIRETFARM) constitute a cross-link (tryptophyl-tyrosyl-methioninium (Tyr-Met) (with W-102)). Position 266 (H266) interacts with heme b.

Belongs to the peroxidase family. Peroxidase/catalase subfamily. In terms of assembly, homodimer or homotetramer. Heme b serves as cofactor. Post-translationally, formation of the three residue Trp-Tyr-Met cross-link is important for the catalase, but not the peroxidase activity of the enzyme.

The catalysed reaction is H2O2 + AH2 = A + 2 H2O. It carries out the reaction 2 H2O2 = O2 + 2 H2O. Its function is as follows. Bifunctional enzyme with both catalase and broad-spectrum peroxidase activity. The chain is Catalase-peroxidase from Caulobacter sp. (strain K31).